The chain runs to 449 residues: HSPB1-associated protein 1 homolog (449 aa).

The region spanning 102 to 266 (WAYADYKYIA…DEARVAEALT (165 aa)) is the JmjC domain. Residues 385–395 (DQDKLRSDNKL) are compositionally biased toward basic and acidic residues. The interval 385–416 (DQDKLRSDNKLGQRSGQSVLQDTENPGGSGEM) is disordered. Over residues 396–410 (GQRSGQSVLQDTENP) the composition is skewed to polar residues.

It is found in the cytoplasm. In terms of biological role, may play a role in cellular stress response. In Danio rerio (Zebrafish), this protein is HSPB1-associated protein 1 homolog (hspbap1).